A 284-amino-acid polypeptide reads, in one-letter code: Tropomyosin (284 aa).

The segment at 1–54 is disordered; sequence MDAIKKKMQAMKLEKDNAMDRADTLEQQNKEANNRAEKTEEEIRATQKKMQQVE. Residues 1 to 273 are a coiled coil; sequence MDAIKKKMQA…KEKYKSITDE (273 aa). Basic and acidic residues predominate over residues 12 to 45; sequence KLEKDNAMDRADTLEQQNKEANNRAEKTEEEIRA.

Belongs to the tropomyosin family. In terms of assembly, homodimer. In terms of tissue distribution, muscle (at protein level). Expressed in leg and chest protection muscle (at protein level). Expressed in claw muscle.

Tropomyosin, in association with the troponin complex, plays a central role in the calcium dependent regulation of muscle contraction. The polypeptide is Tropomyosin (Eriocheir sinensis (Chinese mitten crab)).